The chain runs to 303 residues: Diaminopimelate epimerase (303 aa).

Asn-14 lines the substrate pocket. Residues 60-74 (PVSSAGATADAAAGR) show a composition bias toward low complexity. The segment at 60 to 86 (PVSSAGATADAAAGRPPQPSAGRPPQP) is disordered. Positions 75 to 86 (PPQPSAGRPPQP) are enriched in pro residues. Asn-97 is a binding site for substrate. The active-site Proton donor is the Cys-106. Substrate contacts are provided by residues 107-108 (GN), Asn-178, Asn-209, and 227-228 (ER). The Proton acceptor role is filled by Cys-236. Substrate is bound at residue 237–238 (GS).

Belongs to the diaminopimelate epimerase family. As to quaternary structure, homodimer.

It localises to the cytoplasm. It carries out the reaction (2S,6S)-2,6-diaminopimelate = meso-2,6-diaminopimelate. The protein operates within amino-acid biosynthesis; L-lysine biosynthesis via DAP pathway; DL-2,6-diaminopimelate from LL-2,6-diaminopimelate: step 1/1. Catalyzes the stereoinversion of LL-2,6-diaminopimelate (L,L-DAP) to meso-diaminopimelate (meso-DAP), a precursor of L-lysine and an essential component of the bacterial peptidoglycan. The polypeptide is Diaminopimelate epimerase (Acidothermus cellulolyticus (strain ATCC 43068 / DSM 8971 / 11B)).